The chain runs to 1315 residues: Serine/threonine-protein kinase 36 (1315 aa).

The Protein kinase domain maps to 4-254; it reads YHVLEMIGEG…WPDLLYHPFI (251 aa). ATP is bound by residues 10–18 and Lys33; that span reads IGEGSFGRV. Catalysis depends on Asp125, which acts as the Proton acceptor. Disordered regions lie at residues 312 to 345 and 365 to 405; these read EAMQKKHQNTGPALEQEDKTSKVAPGTAPLPRLG and SWAE…RSTD. The segment covering 379–397 has biased composition (basic and acidic residues); the sequence is RENRTTPDCERAFPEERPE.

This sequence belongs to the protein kinase superfamily. Ser/Thr protein kinase family. Interacts with SPAG16 and KIF27. The cofactor is Mg(2+).

The protein resides in the cytoplasm. Its subcellular location is the nucleus. The protein localises to the cytoskeleton. It is found in the cilium axoneme. The enzyme catalyses L-seryl-[protein] + ATP = O-phospho-L-seryl-[protein] + ADP + H(+). It carries out the reaction L-threonyl-[protein] + ATP = O-phospho-L-threonyl-[protein] + ADP + H(+). Serine/threonine protein kinase which plays an important role in the sonic hedgehog (Shh) pathway by regulating the activity of GLI transcription factors. Controls the activity of the transcriptional regulators GLI1, GLI2 and GLI3 by opposing the effect of SUFU and promoting their nuclear localization. GLI2 requires an additional function of STK36 to become transcriptionally active, but the enzyme does not need to possess an active kinase catalytic site for this to occur. Required for postnatal development, possibly by regulating the homeostasis of cerebral spinal fluid or ciliary function. Essential for construction of the central pair apparatus of motile cilia. The protein is Serine/threonine-protein kinase 36 of Pongo abelii (Sumatran orangutan).